The following is a 961-amino-acid chain: Glycine dehydrogenase (decarboxylating) (961 aa).

K709 carries the N6-(pyridoxal phosphate)lysine modification.

The protein belongs to the GcvP family. The glycine cleavage system is composed of four proteins: P, T, L and H. It depends on pyridoxal 5'-phosphate as a cofactor.

The catalysed reaction is N(6)-[(R)-lipoyl]-L-lysyl-[glycine-cleavage complex H protein] + glycine + H(+) = N(6)-[(R)-S(8)-aminomethyldihydrolipoyl]-L-lysyl-[glycine-cleavage complex H protein] + CO2. Its function is as follows. The glycine cleavage system catalyzes the degradation of glycine. The P protein binds the alpha-amino group of glycine through its pyridoxal phosphate cofactor; CO(2) is released and the remaining methylamine moiety is then transferred to the lipoamide cofactor of the H protein. This Streptomyces avermitilis (strain ATCC 31267 / DSM 46492 / JCM 5070 / NBRC 14893 / NCIMB 12804 / NRRL 8165 / MA-4680) protein is Glycine dehydrogenase (decarboxylating).